A 386-amino-acid polypeptide reads, in one-letter code: 1-deoxy-D-xylulose 5-phosphate reductoisomerase (386 aa).

NADPH is bound by residues Thr-10, Gly-11, Ser-12, Ile-13, Gly-36, Asn-38, and Asn-122. Lys-123 provides a ligand contact to 1-deoxy-D-xylulose 5-phosphate. Glu-124 contributes to the NADPH binding site. Asp-148 contacts Mn(2+). 1-deoxy-D-xylulose 5-phosphate-binding residues include Ser-149, Glu-150, Ser-174, and His-197. Mn(2+) is bound at residue Glu-150. Gly-203 is an NADPH binding site. Ser-210, Asn-215, Lys-216, and Glu-219 together coordinate 1-deoxy-D-xylulose 5-phosphate. Position 219 (Glu-219) interacts with Mn(2+).

It belongs to the DXR family. It depends on Mg(2+) as a cofactor. Mn(2+) serves as cofactor.

The enzyme catalyses 2-C-methyl-D-erythritol 4-phosphate + NADP(+) = 1-deoxy-D-xylulose 5-phosphate + NADPH + H(+). The protein operates within isoprenoid biosynthesis; isopentenyl diphosphate biosynthesis via DXP pathway; isopentenyl diphosphate from 1-deoxy-D-xylulose 5-phosphate: step 1/6. Catalyzes the NADPH-dependent rearrangement and reduction of 1-deoxy-D-xylulose-5-phosphate (DXP) to 2-C-methyl-D-erythritol 4-phosphate (MEP). The chain is 1-deoxy-D-xylulose 5-phosphate reductoisomerase from Geotalea uraniireducens (strain Rf4) (Geobacter uraniireducens).